Consider the following 204-residue polypeptide: Ricin B-like lectin R40G3 (204 aa).

The region spanning 54 to 200 is the Ricin B-type lectin domain; the sequence is TVKVYCRANP…CEGDNQRWKI (147 aa).

Expressed in shoots and lamina.

In terms of biological role, lectin which binds carbohydrates in vitro. Interacts through its lectin domain with glycan structures containing specific motifs. This chain is Ricin B-like lectin R40G3, found in Oryza sativa subsp. japonica (Rice).